A 192-amino-acid polypeptide reads, in one-letter code: uncharacterized protein (192 aa).

Residues 1–17 (MFLHLILLAGLAPVVYL) form the signal peptide.

This is an uncharacterized protein from Caenorhabditis elegans.